Here is a 222-residue protein sequence, read N- to C-terminus: Flagellar L-ring protein (222 aa).

The first 21 residues, 1 to 21 (MQTFLYPRTWLILGLLLLGSG), serve as a signal peptide directing secretion. Cys22 carries the N-palmitoyl cysteine lipid modification. A lipid anchor (S-diacylglycerol cysteine) is attached at Cys22.

It belongs to the FlgH family. As to quaternary structure, the basal body constitutes a major portion of the flagellar organelle and consists of four rings (L,P,S, and M) mounted on a central rod.

Its subcellular location is the cell outer membrane. It localises to the bacterial flagellum basal body. In terms of biological role, assembles around the rod to form the L-ring and probably protects the motor/basal body from shearing forces during rotation. This chain is Flagellar L-ring protein, found in Methylobacillus flagellatus (strain ATCC 51484 / DSM 6875 / VKM B-1610 / KT).